A 468-amino-acid chain; its full sequence is Na(+)/H(+) antiporter (468 aa).

8 helical membrane passes run 12 to 32 (HLALIVAGGFITFFCYFSEVF), 36 to 56 (LLVGEAVLGSITGLIFGPHAA), 81 to 96 (DVRVFASAIELPGAYF), 103 to 123 (IIVMLLPVMAYGWLVTAGFAY), 133 to 153 (GSLLIAGCITSTDPVLSALIV), 169 to 189 (LLIAESGCNDGMAVPFFYFAI), 204 to 224 (WVLLVVLYECAFGIFFGCVIG), and 258 to 278 (GIGTIIGVDDLLMSFFAGILF). N287 carries an N-linked (GlcNAc...) asparagine glycan. Residues 293–313 (VPAFIDQTFSLLFFTYYGTII) traverse the membrane as a helical segment. N319 carries an N-linked (GlcNAc...) asparagine glycan. Transmembrane regions (helical) follow at residues 320-340 (WSVEGLPVWRLIVFSILTLVC), 362-382 (ALFVGHFGPIGVCAVYMAFLA), and 408-428 (IIWPIISFVILSSIIVHGFSI). S449 and S451 each carry phosphoserine.

This sequence belongs to the fungal Na(+)/H(+) exchanger family.

The protein localises to the cell membrane. Its function is as follows. Sodium export from cell, takes up external protons in exchange for internal sodium ions. Involved in regulation of pH. The protein is Na(+)/H(+) antiporter of Schizosaccharomyces pombe (strain 972 / ATCC 24843) (Fission yeast).